Reading from the N-terminus, the 365-residue chain is Spermidine-binding periplasmic protein SpuE (365 aa).

Positions 1 to 24 are cleaved as a signal peptide; sequence MQHSIGKTLLVAALATAIAGPVQA. Spermidine-binding residues include threonine 35, glutamate 181, aspartate 242, and asparagine 269.

The protein belongs to the bacterial solute-binding protein PotD/PotF family.

The protein resides in the periplasm. Functionally, spermidine-binding protein probably required for its uptake into cells. Binds spermidine with high affinity (KD=14.3 nM). Does not bind putrescine, cadaverine or spermine. Spermidine binding induces large inter-domain conformational changes. Implicated in induction of type 3 secretion systems (T3SS), which play a role in virulence. This is Spermidine-binding periplasmic protein SpuE (spuE) from Pseudomonas aeruginosa (strain ATCC 15692 / DSM 22644 / CIP 104116 / JCM 14847 / LMG 12228 / 1C / PRS 101 / PAO1).